The chain runs to 310 residues: Thioredoxin reductase (310 aa).

34-41 (NGMQPGGQ) provides a ligand contact to FAD. A disulfide bridge links cysteine 135 with cysteine 138. 281–290 (DVQDKIYRQA) contacts FAD.

The protein belongs to the class-II pyridine nucleotide-disulfide oxidoreductase family. Homodimer. The cofactor is FAD.

It localises to the cytoplasm. The enzyme catalyses [thioredoxin]-dithiol + NADP(+) = [thioredoxin]-disulfide + NADPH + H(+). The sequence is that of Thioredoxin reductase (trxB) from Rickettsia typhi (strain ATCC VR-144 / Wilmington).